We begin with the raw amino-acid sequence, 862 residues long: Mismatch repair endonuclease PMS2 (862 aa).

Asparagine 45, aspartate 70, glutamate 109, alanine 110, and leucine 111 together coordinate ATP. 4 stretches are compositionally biased toward basic and acidic residues: residues 391 to 401 (DLEKPMVEKQD), 408 to 444 (TGEEKKDVSISRLREAFSLRHTTENKPHSPKTPEPRR), 484 to 495 (PTDRAEVEKDSG), and 528 to 552 (GSQEHVDSQEKAPKTDDSFSDVDCH). The tract at residues 391-552 (DLEKPMVEKQ…DDSFSDVDCH (162 aa)) is disordered. Threonine 573 is modified (phosphothreonine). The Nuclear localization signal motif lies at 577–580 (KRFK). The residue at position 597 (threonine 597) is a Phosphothreonine.

Belongs to the DNA mismatch repair MutL/HexB family. As to quaternary structure, heterodimer of PMS2 and MLH1 (MutL alpha); this interaction is required for the stability of both partners. Forms a ternary complex with MutS alpha (MSH2-MSH6) or MutS beta (MSH2-MSH3). Part of the BRCA1-associated genome surveillance complex (BASC), which contains BRCA1, MSH2, MSH6, MLH1, ATM, BLM, PMS2 and the RAD50-MRE11-NBS1 protein complex. This association could be a dynamic process changing throughout the cell cycle and within subnuclear domains. Interacts with MTMR15/FAN1.

It is found in the nucleus. It carries out the reaction ATP + H2O = ADP + phosphate + H(+). Component of the post-replicative DNA mismatch repair system (MMR). Heterodimerizes with MLH1 to form MutL alpha. DNA repair is initiated by MutS alpha (MSH2-MSH6) or MutS beta (MSH2-MSH3) binding to a dsDNA mismatch, then MutL alpha is recruited to the heteroduplex. Assembly of the MutL-MutS-heteroduplex ternary complex in presence of RFC and PCNA is sufficient to activate endonuclease activity of PMS2. It introduces single-strand breaks near the mismatch and thus generates new entry points for the exonuclease EXO1 to degrade the strand containing the mismatch. DNA methylation would prevent cleavage and therefore assure that only the newly mutated DNA strand is going to be corrected. MutL alpha (MLH1-PMS2) interacts physically with the clamp loader subunits of DNA polymerase III, suggesting that it may play a role to recruit the DNA polymerase III to the site of the MMR. Also implicated in DNA damage signaling, a process which induces cell cycle arrest and can lead to apoptosis in case of major DNA damages. Possesses an ATPase activity, but in the absence of gross structural changes, ATP hydrolysis may not be necessary for proficient mismatch repair. This chain is Mismatch repair endonuclease PMS2, found in Homo sapiens (Human).